An 807-amino-acid polypeptide reads, in one-letter code: Glycerol-3-phosphate acyltransferase (807 aa).

The short motif at 305-310 is the HXXXXD motif element; sequence CHRSHM.

The protein belongs to the GPAT/DAPAT family.

It localises to the cell inner membrane. The catalysed reaction is sn-glycerol 3-phosphate + an acyl-CoA = a 1-acyl-sn-glycero-3-phosphate + CoA. The protein operates within phospholipid metabolism; CDP-diacylglycerol biosynthesis; CDP-diacylglycerol from sn-glycerol 3-phosphate: step 1/3. The chain is Glycerol-3-phosphate acyltransferase from Klebsiella pneumoniae subsp. pneumoniae (strain ATCC 700721 / MGH 78578).